The sequence spans 658 residues: Glycogen debranching enzyme (658 aa).

The Nucleophile role is filled by Asp336. The Proton donor role is filled by Glu371. The disordered stretch occupies residues 459–483 (EANGEENRDGTNSNYSDNHGKEGLG).

It belongs to the glycosyl hydrolase 13 family.

It carries out the reaction Hydrolysis of (1-&gt;6)-alpha-D-glucosidic linkages to branches with degrees of polymerization of three or four glucose residues in limit dextrin.. It participates in glycan degradation; glycogen degradation. Its function is as follows. Removes maltotriose and maltotetraose chains that are attached by 1,6-alpha-linkage to the limit dextrin main chain, generating a debranched limit dextrin. In Salmonella agona (strain SL483), this protein is Glycogen debranching enzyme.